A 237-amino-acid chain; its full sequence is UDP-2,3-diacylglucosamine hydrolase (237 aa).

Mn(2+)-binding residues include D9, H11, D42, N80, and H115. 80–81 is a binding site for substrate; the sequence is NR. 5 residues coordinate substrate: D123, S161, K165, K168, and H196. Mn(2+) is bound by residues H196 and H198.

Belongs to the LpxH family. Requires Mn(2+) as cofactor.

Its subcellular location is the cell inner membrane. The protein localises to the cytoplasm. It catalyses the reaction UDP-2-N,3-O-bis[(3R)-3-hydroxytetradecanoyl]-alpha-D-glucosamine + H2O = 2-N,3-O-bis[(3R)-3-hydroxytetradecanoyl]-alpha-D-glucosaminyl 1-phosphate + UMP + 2 H(+). It participates in glycolipid biosynthesis; lipid IV(A) biosynthesis; lipid IV(A) from (3R)-3-hydroxytetradecanoyl-[acyl-carrier-protein] and UDP-N-acetyl-alpha-D-glucosamine: step 4/6. Its function is as follows. Hydrolyzes the pyrophosphate bond of UDP-2,3-diacylglucosamine to yield 2,3-diacylglucosamine 1-phosphate (lipid X) and UMP by catalyzing the attack of water at the alpha-P atom. Involved in the biosynthesis of lipid A, a phosphorylated glycolipid that anchors the lipopolysaccharide to the outer membrane of the cell. This Haemophilus influenzae (strain ATCC 51907 / DSM 11121 / KW20 / Rd) protein is UDP-2,3-diacylglucosamine hydrolase.